A 283-amino-acid polypeptide reads, in one-letter code: Type III pantothenate kinase (283 aa).

Aspartate 9–lysine 16 contributes to the ATP binding site. Substrate contacts are provided by residues tyrosine 116 and glycine 123–arginine 126. The Proton acceptor role is filled by aspartate 125. Residue threonine 149 participates in ATP binding. Residue threonine 211 participates in substrate binding.

Belongs to the type III pantothenate kinase family. Homodimer. NH4(+) serves as cofactor. Requires K(+) as cofactor.

It localises to the cytoplasm. It catalyses the reaction (R)-pantothenate + ATP = (R)-4'-phosphopantothenate + ADP + H(+). Its pathway is cofactor biosynthesis; coenzyme A biosynthesis; CoA from (R)-pantothenate: step 1/5. Functionally, catalyzes the phosphorylation of pantothenate (Pan), the first step in CoA biosynthesis. The protein is Type III pantothenate kinase of Cupriavidus taiwanensis (strain DSM 17343 / BCRC 17206 / CCUG 44338 / CIP 107171 / LMG 19424 / R1) (Ralstonia taiwanensis (strain LMG 19424)).